Consider the following 614-residue polypeptide: Vitamin B12 transporter BtuB (614 aa).

Residues 1–20 (MIKKATLLTAFSVTAFSAWA) form the signal peptide. The TonB box signature appears at 26–33 (DTLVVTAN). The TBDR plug domain occupies 38 to 152 (PRSAVLAPVT…IGGVVNIITT (115 aa)). Residues Ser-85, Asn-92, and 110-111 (VS) each bind cyanocob(III)alamin. The region spanning 155 to 614 (NPGTELTAGW…EYTLSGSYTF (460 aa)) is the TBDR beta-barrel domain. The next 3 beta stranded transmembrane spans lie at 158–165 (TELTAGWG), 169–178 (YQNYDISTQQ), and 184–195 (TRATLIGDYEYT). Residues Asp-199, Gln-211, Asp-213, and Asp-215 each contribute to the Ca(2+) site. 2 beta stranded membrane-spanning segments follow: residues 217–227 (FLSKTLYGALE) and 232–248 (DRWS…NRTD). The Ca(2+) site is built by Tyr-249 and Asp-250. Position 251 (Ala-251) interacts with cyanocob(III)alamin. Asp-261 contributes to the Ca(2+) binding site. Transmembrane regions (beta stranded) follow at residues 263-277 (RKLY…LHFN), 279-296 (ERIQ…KDYN), 309-325 (TLDE…NSVV), 328-337 (HGNVGAGVDW), 353-369 (YDQR…QQLG), 371-381 (FTLEAAARSDD), 385-400 (FGRH…WEFI), 403-417 (YRFI…KAPN), 434-443 (KSKQWEGAFE), 449-458 (VSWRISGYRN), 473-490 (YYNE…TANF), 494-509 (PLTH…ARNA), 517-529 (RRSK…QLDW), and 535-550 (DWGM…YDSD). Thr-309 is a cyanocob(III)alamin binding site. Arg-517 contributes to the cyanocob(III)alamin binding site. Position 551 (Tyr-551) interacts with cyanocob(III)alamin. 3 beta stranded membrane passes run 558 to 572 (TVKM…LTVA), 585 to 596 (IANLFDKDYETV), and 602 to 614 (AGRE…SYTF). The TonB C-terminal box motif lies at 597-614 (YGYQTAGREYTLSGSYTF).

Belongs to the TonB-dependent receptor family. BtuB (TC 1.B.14.3.1) subfamily.

The protein localises to the cell outer membrane. Functionally, involved in the active translocation of vitamin B12 (cyanocobalamin) across the outer membrane to the periplasmic space. It derives its energy for transport by interacting with the trans-periplasmic membrane protein TonB. This chain is Vitamin B12 transporter BtuB, found in Salmonella typhimurium (strain LT2 / SGSC1412 / ATCC 700720).